A 646-amino-acid polypeptide reads, in one-letter code: P-selectin (646 aa).

The signal sequence occupies residues 1–41 (MASCPKAIWNWRFQRAVFRTVQLLCFSVLIFEVINQKEVSA). At 42-587 (WTYHYSNKTY…QAGPLTIQET (546 aa)) the chain is on the extracellular side. 3 N-linked (GlcNAc...) asparagine glycosylation sites follow: N48, N54, and N80. Positions 58-158 (AFCQKYYTDL…PCWKRKRALC (101 aa)) constitute a C-type lectin domain. Disulfide bonds link C60-C158, C131-C150, C163-C174, C168-C183, C185-C194, C200-C244, C230-C257, C262-C306, C292-C319, C324-C368, C354-C381, C386-C430, C416-C443, C458-C502, C488-C515, C520-C564, and C550-C577. The Ca(2+) site is built by E121, N123, and N124. N123 is an a carbohydrate binding site. Residues E133 and N146 each contribute to the a carbohydrate site. Ca(2+) is bound by residues N146 and D147. The region spanning 159–195 (YRASCQDMSCSKQGECIETIGNYTCSCYPGFYGPECE) is the EGF-like domain. An N-linked (GlcNAc...) asparagine glycan is attached at N180. Sushi domains lie at 198-259 (RECG…QCVA), 260-321 (VQCP…VCKA), 322-383 (LQCQ…ECQA), 384-445 (VTCA…TCEE), 456-517 (VQCP…TCRA), and 518-579 (VKCA…TCQA). 2 N-linked (GlcNAc...) asparagine glycosylation sites follow: N212 and N219. A glycan (N-linked (GlcNAc...) asparagine) is linked at N336. The N-linked (GlcNAc...) asparagine glycan is linked to N481. 3 N-linked (GlcNAc...) asparagine glycosylation sites follow: N532, N539, and N557. A helical transmembrane segment spans residues 588–611 (LTYVGGAAAGTTGLVTGSILLALL). The Cytoplasmic portion of the chain corresponds to 612–646 (RRRCRQKDDGKSPLNPQSHLGTYGVFTNAAFDPSP). Residues 634–637 (YGVF) carry the Endocytosis signal motif. Residues 637-646 (FTNAAFDPSP) form an interaction with SNX17 region.

This sequence belongs to the selectin/LECAM family. Interacts with SNX17. Interacts with SELPLG/PSGL1 and PODXL2 and mediates neutrophil adhesion and leukocyte rolling. This interaction requires the sialyl-Lewis X epitope of SELPLG and PODXL2, and specific tyrosine sulfation on SELPLG. Interacts (via C-type lectin domain) with alpha-IIb/beta3 integrin ITGA2B:ITGB3 and alpha-V/beta-3 integrin ITGAV:ITGB3. Interacts with alpha5/beta1 integrin ITGA5:ITGB1 and alpha4/beta1 integrin ITGA4:ITGB. Stored in the alpha-granules of platelets and Weibel-Palade bodies of endothelial cells. Upon cell activation by agonists, P-selectin is transported rapidly to the cell surface.

Its subcellular location is the cell membrane. Ca(2+)-dependent receptor for myeloid cells that binds to carbohydrates on neutrophils and monocytes. Mediates the interaction of activated endothelial cells or platelets with leukocytes. The ligand recognized is sialyl-Lewis X. Mediates rapid rolling of leukocyte rolling over vascular surfaces during the initial steps in inflammation through interaction with SELPLG. Mediates cell-cell interactions and cell adhesion via the interaction with integrin alpha-IIb/beta3 (ITGA2B:ITGB3) and integrin alpha-V/beta-3 (ITGAV:ITGB3). The chain is P-selectin (SELP) from Bos taurus (Bovine).